The chain runs to 346 residues: MTTKISRRTFFVGGTALTALVVANLPRRASAQSRTINLYSSRHYNTDDALYDAFGEVNLIEASAEELIERIQSEGANSPGDILFTVDAGMLWRAEQAGLFQPVRSGKLNERIPENLRHPDGLWYGFTQRARVLYYSRDRVNPADLSTYEALADPQWRGKILVRPSSNVYNLSLTASRIAIHGEPETRRWLQGLVGNFARQPEGNDTAQIRAIAAGIGDVAIANSYYYIRLQKSTDPADQEVVEKVSLFFPNTGSGERGTHVNVSGAGVLKNAPNRDAAIAFLEYLASDDAQRYFAEGNNEYPVIPGVPIDPVLAAHGQLKGDPLNVSNLGRYQPDSARLMNEVGWQ.

The segment at residues 1–31 is a signal peptide (tat-type signal); sequence MTTKISRRTFFVGGTALTALVVANLPRRASA. Fe cation-binding residues include H43, Y44, Y169, Y225, and Y226.

It belongs to the bacterial solute-binding protein 1 family. In terms of processing, predicted to be exported by the Tat system. The position of the signal peptide cleavage has not been experimentally proven.

It localises to the cellular thylakoid membrane. The protein localises to the periplasm. In terms of biological role, probably part of a periplasmic ABC transporter complex futA1A2BC (TC 3.A.1.10.2) involved in Fe(3+) ion import (ferric iron). This protein and futA1 (slr1295) are subunit proteins that have redundant or overlapping substrate-binding functions. The differing subcellular locations of futA1 (predominantly thylakoid lumen) and futA2 (predominantly periplasmic) suggest they may fulfill different roles. Plays an important role in protecting the acceptor side of photosystem II (PSII) against oxidative damage, especially under iron-limiting growth conditions. Functionally, plays an undefined role in copper supply to thylakoid proteins. The polypeptide is Iron uptake protein A2 (futA2) (Synechocystis sp. (strain ATCC 27184 / PCC 6803 / Kazusa)).